The sequence spans 457 residues: Acetylcholine receptor subunit alpha (457 aa).

Positions 1-20 are cleaved as a signal peptide; that stretch reads MEPWPLLLLFSLCSAGLVLG. Residues 21-232 are Extracellular-facing; that stretch reads SEHETRLVAK…YHFVMQRLPL (212 aa). 2 cysteine pairs are disulfide-bonded: cysteine 148–cysteine 162 and cysteine 212–cysteine 213. N-linked (GlcNAc...) asparagine glycosylation occurs at asparagine 161. Residues 233-253 form a helical membrane-spanning segment; that stretch reads YFIVNVIIPCLLFSFLTGLVF. The Cytoplasmic segment spans residues 254-264; the sequence is YLPTDSGEKMT. Residues 265-285 traverse the membrane as a helical segment; sequence LSISVLLSLTVFLLVIVELIP. Topologically, residues 286-296 are extracellular; sequence STSSAVPLIGK. The chain crosses the membrane as a helical span at residues 297–317; it reads YMLFTMVFVIASIIITVIVIN. The Cytoplasmic segment spans residues 318–427; sequence THHRSPSTHV…EWKYVAMVMD (110 aa). A helical membrane pass occupies residues 428-448; sequence HILLGVFMLVCIIGTLAVFAG. At 449–457 the chain is on the extracellular side; the sequence is RLIELNQQG.

This sequence belongs to the ligand-gated ion channel (TC 1.A.9) family. Acetylcholine receptor (TC 1.A.9.1) subfamily. Alpha-1/CHRNA1 sub-subfamily. In terms of assembly, one of the alpha chains that assemble within the acetylcholine receptor, a pentamer of two alpha chains, a beta, a delta, and a gamma (in immature muscle) or epsilon (in mature muscle) chains. The muscle heteropentamer composed of alpha-1, beta-1, delta, epsilon subunits interacts with the alpha-conotoxin ImII. As to quaternary structure, is able to interact with other subunits of the acetylcholine receptor but is not assembled into functional acetylcholine-gated cation-selective channels. Isoform 1 is only expressed in skeletal muscle. Isoform 2 is constitutively expressed in skeletal muscle, brain, heart, kidney, liver, lung and thymus.

It is found in the postsynaptic cell membrane. It localises to the cell membrane. It carries out the reaction K(+)(in) = K(+)(out). The catalysed reaction is Na(+)(in) = Na(+)(out). In terms of biological role, upon acetylcholine binding, the AChR responds by an extensive change in conformation that affects all subunits and leads to opening of an ion-conducting channel across the plasma membrane. Functionally, non functional acetylcholine receptor alpha subunit which is not integrated into functional acetylcholine-gated cation-selective channels. This chain is Acetylcholine receptor subunit alpha, found in Homo sapiens (Human).